A 409-amino-acid polypeptide reads, in one-letter code: O-glucosyltransferase rumi (409 aa).

An N-terminal signal peptide occupies residues 1-20; sequence MLINVVLIILLVGLNGKASG. 4 disulfide bridges follow: Cys-62–Cys-73, Cys-71–Cys-376, Cys-118–Cys-124, and Cys-280–Cys-303. Residue Asp-149 is the Proton donor/acceptor of the active site. The interval 190-195 is interaction with the consensus sequence C-X-S-X-[PA]-C in peptide substrates; that stretch reads ATKLHP. Residues 227 to 231, Arg-235, 274 to 276, and 292 to 296 each bind UDP-alpha-D-glucose; these read RGSRT, VSF, and AASFR. Positions 406-409 match the Prevents secretion from ER motif; sequence KDEL.

Belongs to the glycosyltransferase 90 family.

The protein resides in the endoplasmic reticulum lumen. It functions in the pathway protein modification; protein glycosylation. In terms of biological role, protein O-glucosyltransferase. Catalyzes the reaction that attaches glucose through an O-glycosidic linkage to a conserved serine residue found in the consensus sequence C-X-S-X-[PA]-C in epidermal growth factor-like repeats. Regulates Notch signaling by glucosylating Notch in the ER, glucosylation is required for the correct folding and cleavage of Notch. This chain is O-glucosyltransferase rumi, found in Drosophila pseudoobscura pseudoobscura (Fruit fly).